Reading from the N-terminus, the 562-residue chain is Probable malate:quinone oxidoreductase (562 aa).

The interval 530–562 is disordered; sequence EVPDKSATPTDPTIAPKHQHSTTHNANSEMQAL. Residues 551–562 show a composition bias toward polar residues; sequence TTHNANSEMQAL.

It belongs to the MQO family. It depends on FAD as a cofactor.

The catalysed reaction is (S)-malate + a quinone = a quinol + oxaloacetate. It functions in the pathway carbohydrate metabolism; tricarboxylic acid cycle; oxaloacetate from (S)-malate (quinone route): step 1/1. The sequence is that of Probable malate:quinone oxidoreductase from Xylella fastidiosa (strain M12).